A 95-amino-acid chain; its full sequence is Putative small ubiquitin-related modifier 7 (95 aa).

The Ubiquitin-like domain maps to 13–90 (SHITIKIKSQ…IDAFVDQIAG (78 aa)). A Glycyl lysine isopeptide (Gly-Lys) (interchain with K-? in acceptor proteins) cross-link involves residue Gly-90.

It belongs to the ubiquitin family. SUMO subfamily. As to quaternary structure, interacts with SAE2, SCE1, SIZ1 and MMS21 Covalently attached to a number of proteins.

The protein localises to the nucleus. It localises to the cytoplasm. Functionally, ubiquitin-like protein which can be covalently attached to target lysines as a monomer. Does not seem to be involved in protein degradation and may function as an antagonist of ubiquitin in the degradation process. The chain is Putative small ubiquitin-related modifier 7 (SUMO7) from Arabidopsis thaliana (Mouse-ear cress).